A 280-amino-acid polypeptide reads, in one-letter code: Urease accessory protein UreD (280 aa).

Belongs to the UreD family. UreD, UreF and UreG form a complex that acts as a GTP-hydrolysis-dependent molecular chaperone, activating the urease apoprotein by helping to assemble the nickel containing metallocenter of UreC. The UreE protein probably delivers the nickel.

The protein localises to the cytoplasm. Required for maturation of urease via the functional incorporation of the urease nickel metallocenter. The sequence is that of Urease accessory protein UreD from Pseudomonas aeruginosa (strain ATCC 15692 / DSM 22644 / CIP 104116 / JCM 14847 / LMG 12228 / 1C / PRS 101 / PAO1).